The chain runs to 353 residues: Nicotinate-nucleotide--dimethylbenzimidazole phosphoribosyltransferase (353 aa).

Residue glutamate 319 is the Proton acceptor of the active site.

The protein belongs to the CobT family.

It catalyses the reaction 5,6-dimethylbenzimidazole + nicotinate beta-D-ribonucleotide = alpha-ribazole 5'-phosphate + nicotinate + H(+). The protein operates within nucleoside biosynthesis; alpha-ribazole biosynthesis; alpha-ribazole from 5,6-dimethylbenzimidazole: step 1/2. Functionally, catalyzes the synthesis of alpha-ribazole-5'-phosphate from nicotinate mononucleotide (NAMN) and 5,6-dimethylbenzimidazole (DMB). The chain is Nicotinate-nucleotide--dimethylbenzimidazole phosphoribosyltransferase from Prosthecochloris aestuarii (strain DSM 271 / SK 413).